Consider the following 435-residue polypeptide: Cell adhesion molecule 2 (435 aa).

An N-terminal signal peptide occupies residues 1-24 (MIWKRSAVLRFYSVCGLLLQGSQG). Residues 25 to 367 (QFPLTQNVTV…ALAGQNGPDH (343 aa)) are Extracellular-facing. The Ig-like V-type domain occupies 27-119 (PLTQNVTVVE…PVKTSKAYLT (93 aa)). N-linked (GlcNAc...) asparagine glycosylation is found at asparagine 31 and asparagine 51. Disulfide bonds link cysteine 44-cysteine 104, cysteine 146-cysteine 203, and cysteine 248-cysteine 296. 2 Ig-like C2-type domains span residues 127–219 (PQIS…VAMQ) and 227–312 (PSVK…YVLI). An N-linked (GlcNAc...) asparagine glycan is attached at asparagine 291. Residues 368 to 388 (ALIGGIVAVVVFVTLCSIFLL) form a helical membrane-spanning segment. The Cytoplasmic portion of the chain corresponds to 389-435 (GRYLARHKGTYLTNEAKGAEDAPDADTAIINAEGSQVNAEEKKEYFI). Position 423 is a phosphoserine (serine 423).

The protein belongs to the nectin family.

The protein localises to the cell membrane. It localises to the synapse. Its subcellular location is the cell projection. The protein resides in the axon. In terms of biological role, adhesion molecule that engages in homo- and heterophilic interactions with the other nectin-like family members, leading to cell aggregation. Important for synapse organization, providing regulated trans-synaptic adhesion. Preferentially binds to oligodendrocytes. (Microbial infection) Induces cell fusion in neuron infected by a neuropathogenic strain of measles. Interacts with measles hemagglutinin to trigger hyperfusogenic F-mediated membrane fusion and presumably transsynaptic cell-to-cell transmission of the virus. This is Cell adhesion molecule 2 (CADM2) from Homo sapiens (Human).